The primary structure comprises 721 residues: Methionine--tRNA ligase (721 aa).

The short motif at 27–37 (PYANGQIHIGH) is the 'HIGH' region element. Positions 158, 161, 171, and 174 each coordinate Zn(2+). The 'KMSKS' region motif lies at 348-352 (KMSKS). Lys-351 provides a ligand contact to ATP. In terms of domain architecture, tRNA-binding spans 615 to 721 (DFAKIDLRIA…SGAKPGMRVK (107 aa)).

The protein belongs to the class-I aminoacyl-tRNA synthetase family. MetG type 1 subfamily. Homodimer. It depends on Zn(2+) as a cofactor.

Its subcellular location is the cytoplasm. The enzyme catalyses tRNA(Met) + L-methionine + ATP = L-methionyl-tRNA(Met) + AMP + diphosphate. In terms of biological role, is required not only for elongation of protein synthesis but also for the initiation of all mRNA translation through initiator tRNA(fMet) aminoacylation. The sequence is that of Methionine--tRNA ligase from Burkholderia vietnamiensis (strain G4 / LMG 22486) (Burkholderia cepacia (strain R1808)).